The sequence spans 201 residues: Adapter protein MecA 1 (201 aa).

The protein belongs to the MecA family. Homodimer.

Functionally, enables the recognition and targeting of unfolded and aggregated proteins to the ClpC protease or to other proteins involved in proteolysis. Acts negatively in the development of competence by binding ComK and recruiting it to the ClpCP protease. When overexpressed, inhibits sporulation. Also involved in Spx degradation by ClpC. This Halalkalibacterium halodurans (strain ATCC BAA-125 / DSM 18197 / FERM 7344 / JCM 9153 / C-125) (Bacillus halodurans) protein is Adapter protein MecA 1 (mecA1).